Reading from the N-terminus, the 837-residue chain is Protein translocase subunit SecA (837 aa).

Residues Gln-85, 103-107, and Asp-493 contribute to the ATP site; that span reads GEGKT. Residues Cys-821, Cys-823, Cys-832, and His-833 each contribute to the Zn(2+) site.

Belongs to the SecA family. As to quaternary structure, monomer and homodimer. Part of the essential Sec protein translocation apparatus which comprises SecA, SecYEG and auxiliary proteins SecDF. Other proteins may also be involved. It depends on Zn(2+) as a cofactor.

The protein resides in the cell membrane. Its subcellular location is the cytoplasm. The catalysed reaction is ATP + H2O + cellular proteinSide 1 = ADP + phosphate + cellular proteinSide 2.. In terms of biological role, part of the Sec protein translocase complex. Interacts with the SecYEG preprotein conducting channel. Has a central role in coupling the hydrolysis of ATP to the transfer of proteins into and across the cell membrane, serving as an ATP-driven molecular motor driving the stepwise translocation of polypeptide chains across the membrane. The sequence is that of Protein translocase subunit SecA from Streptococcus pneumoniae (strain Taiwan19F-14).